The primary structure comprises 134 residues: Profilin-3 (134 aa).

Residues C13 and C118 are joined by a disulfide bond. Positions 84–100 (AVIRGKKGSGGITIKKT) match the Involved in PIP2 interaction motif. T114 carries the post-translational modification Phosphothreonine.

Belongs to the profilin family. In terms of assembly, occurs in many kinds of cells as a complex with monomeric actin in a 1:1 ratio. Phosphorylated by MAP kinases.

The protein resides in the cytoplasm. It is found in the cytoskeleton. Its function is as follows. Binds to actin and affects the structure of the cytoskeleton. At high concentrations, profilin prevents the polymerization of actin, whereas it enhances it at low concentrations. The chain is Profilin-3 from Olea europaea (Common olive).